We begin with the raw amino-acid sequence, 278 residues long: Dermonecrotic toxin LlSicTox-alphaIII3iii (278 aa).

The active site involves His5. Residues Glu25 and Asp27 each contribute to the Mg(2+) site. The active-site Nucleophile is the His40. A disulfide bridge links Cys44 with Cys50. A Mg(2+)-binding site is contributed by Asp84.

This sequence belongs to the arthropod phospholipase D family. Class I subfamily. Requires Mg(2+) as cofactor. In terms of tissue distribution, expressed by the venom gland.

It localises to the secreted. The enzyme catalyses an N-(acyl)-sphingosylphosphocholine = an N-(acyl)-sphingosyl-1,3-cyclic phosphate + choline. It carries out the reaction an N-(acyl)-sphingosylphosphoethanolamine = an N-(acyl)-sphingosyl-1,3-cyclic phosphate + ethanolamine. The catalysed reaction is a 1-acyl-sn-glycero-3-phosphocholine = a 1-acyl-sn-glycero-2,3-cyclic phosphate + choline. It catalyses the reaction a 1-acyl-sn-glycero-3-phosphoethanolamine = a 1-acyl-sn-glycero-2,3-cyclic phosphate + ethanolamine. Functionally, dermonecrotic toxins cleave the phosphodiester linkage between the phosphate and headgroup of certain phospholipids (sphingolipid and lysolipid substrates), forming an alcohol (often choline) and a cyclic phosphate. This toxin acts on sphingomyelin (SM). It may also act on ceramide phosphoethanolamine (CPE), lysophosphatidylcholine (LPC) and lysophosphatidylethanolamine (LPE), but not on lysophosphatidylserine (LPS), and lysophosphatidylglycerol (LPG). It acts by transphosphatidylation, releasing exclusively cyclic phosphate products as second products. Induces dermonecrosis, hemolysis, increased vascular permeability, edema, inflammatory response, and platelet aggregation. The chain is Dermonecrotic toxin LlSicTox-alphaIII3iii from Loxosceles laeta (South American recluse spider).